Consider the following 227-residue polypeptide: Interleukin-6 (227 aa).

A signal peptide spans 1-22 (MASISYLLAPLVLAAVLQPTAG). Positions 24 to 45 (PLDAPTESPAGETSGEEAETGS) are disordered. Residues cysteine 93 and cysteine 103 are joined by a disulfide bond.

Belongs to the IL-6 superfamily. As to quaternary structure, component of a hexamer of two molecules each of IL6, IL6R and IL6ST; first binds to IL6R to associate with the signaling subunit IL6ST. As to expression, after induction, highly expressed in spleen. Can also be expressed in kidney after incubation with PHA.

The protein localises to the secreted. Its function is as follows. Cytokine with a wide variety of biological functions in immunity, tissue regeneration, and metabolism. Binds to IL6R, then the complex associates to the signaling subunit IL6ST/gp130 to trigger the intracellular IL6-signaling pathway. The interaction with the membrane-bound IL6R and IL6ST stimulates 'classic signaling', whereas the binding of IL6 and soluble IL6R to IL6ST stimulates 'trans-signaling'. Alternatively, 'cluster signaling' occurs when membrane-bound IL6:IL6R complexes on transmitter cells activate IL6ST receptors on neighboring receiver cells. In Takifugu rubripes (Japanese pufferfish), this protein is Interleukin-6 (il6).